Reading from the N-terminus, the 509-residue chain is MAEKPKKPQKLRARLPRGLADRGPAEIAATRAMVEKIREVYERYGFEPVETPAFEYTDALGKFLPDQDRPNEGVFSLQDDDEQWISLRYDLTAPLARYVAENFDQLPKPYRSYRFGWVFRNEKPGPGRFRQFMQFDADTVGSGSPAADAEMCMMAADTMEALGIPRGSYLVKLNNRKILDGVLEAIGIGGDEHIKQRLVVLRAIDKLDRLGLQGVEQLLGEGRKDESGDFTRGASLNAGQIRDVITLLNFAGWGDIVDGSNTHTLDEWEGLRFSVNSTFSAGIQDLRQITKITEASGYDTGRIRVDNTVVRGLEYYTGPVFEVELLLDTKDEKGRPVRFGSVGGGGRYDGLVSRFRGEPVPATGFSIGVSRLQAALTLIGQLGNKPQAGPVVVTVFGGEIAGYQKMVATLRKAGIRAELYLGNPKHSLGQQMKYADKRNSPCAIIQGSDEKQQGIVQIKDLILGAELASLEKDRDEYLKKQAEAQFSCKEDEMVAKVQELLQRRGVAWG.

The protein belongs to the class-II aminoacyl-tRNA synthetase family. As to quaternary structure, homodimer.

The protein resides in the cytoplasm. The enzyme catalyses tRNA(His) + L-histidine + ATP = L-histidyl-tRNA(His) + AMP + diphosphate + H(+). This is Histidine--tRNA ligase from Rhodopseudomonas palustris (strain TIE-1).